Consider the following 135-residue polypeptide: Global transcriptional regulator Spx 2 (135 aa).

The active site involves Cys10.

This sequence belongs to the ArsC family. Spx subfamily. As to quaternary structure, interacts with the C-terminal domain of the alpha subunit of the RNAP.

Its subcellular location is the cytoplasm. Its function is as follows. Global transcriptional regulator that plays a key role in stress response and exerts either positive or negative regulation of genes. Acts by interacting with the C-terminal domain of the alpha subunit of the RNA polymerase (RNAP). This interaction can enhance binding of RNAP to the promoter region of target genes and stimulate their transcription, or block interaction of RNAP with activator. The sequence is that of Global transcriptional regulator Spx 2 from Oceanobacillus iheyensis (strain DSM 14371 / CIP 107618 / JCM 11309 / KCTC 3954 / HTE831).